Reading from the N-terminus, the 282-residue chain is Ribosomal RNA small subunit methyltransferase A (282 aa).

The S-adenosyl-L-methionine site is built by His15, Leu17, Gly42, Glu64, Asp89, and Asn109.

It belongs to the class I-like SAM-binding methyltransferase superfamily. rRNA adenine N(6)-methyltransferase family. RsmA subfamily.

The protein resides in the cytoplasm. The enzyme catalyses adenosine(1518)/adenosine(1519) in 16S rRNA + 4 S-adenosyl-L-methionine = N(6)-dimethyladenosine(1518)/N(6)-dimethyladenosine(1519) in 16S rRNA + 4 S-adenosyl-L-homocysteine + 4 H(+). Its function is as follows. Specifically dimethylates two adjacent adenosines (A1518 and A1519) in the loop of a conserved hairpin near the 3'-end of 16S rRNA in the 30S particle. May play a critical role in biogenesis of 30S subunits. This Prochlorococcus marinus (strain MIT 9211) protein is Ribosomal RNA small subunit methyltransferase A.